A 185-amino-acid chain; its full sequence is Large ribosomal subunit protein uL5 (185 aa).

The protein belongs to the universal ribosomal protein uL5 family. Part of the 50S ribosomal subunit; part of the 5S rRNA subcomplex. Contacts the 5S rRNA and the P site tRNA. Forms a bridge to the 30S subunit in the 70S ribosome. Both N-terminus methionine truncation and retention have been observed for this protein. In terms of processing, may be methylated twice, on undetermined residues.

This is one of the proteins that bind and probably mediate the attachment of the 5S RNA into the large ribosomal subunit, where it forms part of the central protuberance. In the 70S ribosome it contacts protein S13 of the 30S subunit (bridge B1b), connecting the 2 subunits; this bridge is implicated in subunit movement. Contacts the P site tRNA; the 5S rRNA and some of its associated proteins might help stabilize positioning of ribosome-bound tRNAs. The sequence is that of Large ribosomal subunit protein uL5 from Rhodopseudomonas palustris (strain ATCC BAA-98 / CGA009).